The following is a 231-amino-acid chain: Dephospho-CoA kinase domain-containing protein (231 aa).

The region spanning 3-207 (LVGLTGGIAS…RSLEYLPLRF (205 aa)) is the DPCK domain. 8-15 (GGIASGKS) lines the ATP pocket.

It belongs to the CoaE family.

The sequence is that of Dephospho-CoA kinase domain-containing protein (DCAKD) from Homo sapiens (Human).